Consider the following 23-residue polypeptide: Conotoxin Cl6c (23 aa).

3 cysteine pairs are disulfide-bonded: Cys-2–Cys-12, Cys-5–Cys-17, and Cys-11–Cys-21.

In terms of tissue distribution, expressed by the venom duct.

It localises to the secreted. The chain is Conotoxin Cl6c from Californiconus californicus (California cone).